The primary structure comprises 138 residues: Cytochrome b5 (138 aa).

Residues 14-90 (GRYYRLEEVQ…SETFIIGELH (77 aa)) form the Cytochrome b5 heme-binding domain. The heme site is built by His-49 and His-73. Residues 114–136 (SWSNWVIPAIAAIIVALMYRSYM) form a helical membrane-spanning segment.

It belongs to the cytochrome b5 family.

It localises to the endoplasmic reticulum membrane. The protein localises to the microsome membrane. In terms of biological role, cytochrome b5 is a membrane-bound hemoprotein functioning as an electron carrier for several membrane-bound oxygenases. In Gallus gallus (Chicken), this protein is Cytochrome b5 (CYB5A).